Reading from the N-terminus, the 145-residue chain is Protein H2A.5 (145 aa).

The disordered stretch occupies residues serine 118–glutamate 145. Positions serine 135–lysine 138 match the SPKK motif motif. Residues serine 135 to glutamate 145 are compositionally biased toward basic residues.

The protein belongs to the histone H2A family. In terms of assembly, the nucleosome is a histone octamer containing two molecules each of H2A, H2B, H3 and H4 assembled in one H3-H4 heterotetramer and two H2A-H2B heterodimers. The octamer wraps approximately 147 bp of DNA. Abundant in meristematic tissues.

It localises to the nucleus. The protein resides in the chromosome. In terms of biological role, core component of nucleosome. Nucleosomes wrap and compact DNA into chromatin, limiting DNA accessibility to the cellular machineries which require DNA as a template. Histones thereby play a central role in transcription regulation, DNA repair, DNA replication and chromosomal stability. DNA accessibility is regulated via a complex set of post-translational modifications of histones, also called histone code, and nucleosome remodeling. The chain is Protein H2A.5 (H2A-2) from Triticum aestivum (Wheat).